The chain runs to 567 residues: Malate synthase (567 aa).

The active-site Proton acceptor is Arg177. Residue Asp466 is the Proton donor of the active site. The Microbody targeting signal motif lies at 565 to 567 (CKL).

It belongs to the malate synthase family.

Its subcellular location is the glyoxysome. The catalysed reaction is glyoxylate + acetyl-CoA + H2O = (S)-malate + CoA + H(+). It functions in the pathway carbohydrate metabolism; glyoxylate cycle; (S)-malate from isocitrate: step 2/2. In Oryza sativa subsp. japonica (Rice), this protein is Malate synthase.